The following is a 546-amino-acid chain: Chaperonin GroEL (546 aa).

ATP contacts are provided by residues 29-32 (TMGP), Lys-50, 86-90 (DGTTT), Gly-414, and Asp-492.

This sequence belongs to the chaperonin (HSP60) family. Forms a cylinder of 14 subunits composed of two heptameric rings stacked back-to-back. Interacts with the co-chaperonin GroES.

It is found in the cytoplasm. The catalysed reaction is ATP + H2O + a folded polypeptide = ADP + phosphate + an unfolded polypeptide.. Together with its co-chaperonin GroES, plays an essential role in assisting protein folding. The GroEL-GroES system forms a nano-cage that allows encapsulation of the non-native substrate proteins and provides a physical environment optimized to promote and accelerate protein folding. The sequence is that of Chaperonin GroEL from Helicobacter pylori (strain ATCC 700392 / 26695) (Campylobacter pylori).